The primary structure comprises 378 residues: Probable selenide, water dikinase (378 aa).

The active site involves cysteine 33. Residues lysine 36, glycine 63–aspartate 65, aspartate 83, aspartate 106, and glycine 158–threonine 160 contribute to the ATP site. A Mg(2+)-binding site is contributed by aspartate 65. Residue aspartate 106 participates in Mg(2+) binding. Aspartate 260 contacts Mg(2+).

It belongs to the selenophosphate synthase 1 family. Class I subfamily. As to quaternary structure, homodimer. Requires Mg(2+) as cofactor.

It carries out the reaction hydrogenselenide + ATP + H2O = selenophosphate + AMP + phosphate + 2 H(+). Synthesizes selenophosphate from selenide and ATP. The polypeptide is Probable selenide, water dikinase (seld-1) (Caenorhabditis elegans).